The chain runs to 161 residues: Small ribosomal subunit protein uS9 (161 aa).

The protein belongs to the universal ribosomal protein uS9 family.

This is Small ribosomal subunit protein uS9 from Methylobacterium radiotolerans (strain ATCC 27329 / DSM 1819 / JCM 2831 / NBRC 15690 / NCIMB 10815 / 0-1).